The primary structure comprises 581 residues: MTDSPSLESNNKSDMDTPRPPASSHDEHDAAESVSEKQDSATTSPTGKLEPEYLTGLRLGLVMFTIFVSTILVSLEIGIIATAIPGITNDFRKLDDVGWYGSATFILAAAASPLWGKLYKYLNVKWVYLSAVGIFLVGSIVAAAAPNSVAVIVGRALQGWGASGVLGGTLIVINYVAPPRNHPLLIGTWMAVFMMSTILGPVIGGAFTSGVSWRWCFWINLPVGGPIVVLLLLFLRVPKHVKPVPATWKEIILNLDIPGFCLLLVSLVCLTLALQWGGQTKTWDDGSVIATLVLWILLTIGFFIVEWLQGARAMAPLSILKQRMTWSNVIFCLVSYAALYQVMFYLPIYFQSIHGQSAVTSGVNTLPFLAFFALGAMVSGGAIGKTRYTQPYELAGALIMTAGMALIYILDVDSPKAKYIGAEVLFGFGIGLCNQVPMTAVQGFSKPDEVASATGIMVMCQTLSGAYFVAIAQSLFANRMLHALNSGSDHLDVALVLGTGASELQDVFSGDDLTAVIDAYMVGIKDVFAFSLACAAFSVILTALIPFKRLPDHEKKPSKDAMASDEVKASEEVQQEKKVTV.

The span at 1–10 (MTDSPSLESN) shows a compositional bias: polar residues. The segment at 1-47 (MTDSPSLESNNKSDMDTPRPPASSHDEHDAAESVSEKQDSATTSPTG) is disordered. Asparagine 11 is a glycosylation site (N-linked (GlcNAc...) asparagine). A compositionally biased stretch (basic and acidic residues) spans 24–39 (SHDEHDAAESVSEKQD). 14 helical membrane-spanning segments follow: residues 61 to 81 (LVMF…GIIA), 96 to 116 (DVGW…PLWG), 126 to 146 (WVYL…AAAP), 159 to 179 (GWGA…VAPP), 184 to 204 (LLIG…PVIG), 215 to 235 (WCFW…LLFL), 251 to 271 (IILN…VCLT), 288 to 308 (VIAT…VEWL), 330 to 350 (IFCL…PIYF), 363 to 383 (VNTL…GGAI), 392 to 412 (YELA…ILDV), 424 to 444 (VLFG…VQGF), 456 to 476 (IMVM…QSLF), and 527 to 547 (VFAF…LIPF). A disordered region spans residues 552-581 (DHEKKPSKDAMASDEVKASEEVQQEKKVTV). Over residues 565–581 (DEVKASEEVQQEKKVTV) the composition is skewed to basic and acidic residues.

The protein belongs to the major facilitator superfamily. TCR/Tet family.

It localises to the cell membrane. In terms of biological role, efflux pump that is probably involved in the export of dehydrocurvularin. The chain is Dehydrocurvularin exporter from Alternaria cinerariae.